The following is a 536-amino-acid chain: Fanconi anemia group E protein (536 aa).

The interval M150–R371 is interaction with FANCC. A disordered region spans residues L171–K252. A compositionally biased stretch (basic and acidic residues) spans E230–L239. S249 carries the phosphoserine modification. Phosphothreonine; by CHEK1 is present on T346. S374 bears the Phosphoserine; by CHEK1 mark.

In terms of assembly, belongs to the multisubunit FA complex composed of FANCA, FANCB, FANCC, FANCE, FANCF, FANCG, FANCL/PHF9 and FANCM. The complex is not found in FA patients. Interacts with FANCC and FANCD2. In terms of processing, phosphorylated. Phosphorylation by CHEK1 at Thr-346 and Ser-374 regulates its function in DNA cross-links repair. Post-translationally, ubiquitinated. Phosphorylation by CHEK1 induces polyubiquitination and degradation.

The protein localises to the nucleus. Its function is as follows. As part of the Fanconi anemia (FA) complex functions in DNA cross-links repair. Required for the nuclear accumulation of FANCC and provides a critical bridge between the FA complex and FANCD2. The protein is Fanconi anemia group E protein (FANCE) of Homo sapiens (Human).